The following is a 153-amino-acid chain: Vasotocin-neurophysin VT 1 (153 aa).

A signal peptide spans 1–19; it reads MPQCALLLSLLGLLALSSA. Cysteines 20 and 25 form a disulfide. Gly-28 is subject to Glycine amide. Intrachain disulfides connect Cys-41–Cys-85, Cys-44–Cys-58, Cys-52–Cys-75, Cys-59–Cys-65, Cys-92–Cys-105, Cys-99–Cys-117, and Cys-106–Cys-111.

This sequence belongs to the vasopressin/oxytocin family. In terms of processing, seven disulfide bonds are present in neurophysin.

Its subcellular location is the secreted. Functionally, vasotocin is probably an antidiuretic hormone. This Takifugu rubripes (Japanese pufferfish) protein is Vasotocin-neurophysin VT 1.